The chain runs to 239 residues: 2,3,4,5-tetrahydropyridine-2,6-dicarboxylate N-acetyltransferase (239 aa).

Belongs to the transferase hexapeptide repeat family. DapH subfamily.

The catalysed reaction is (S)-2,3,4,5-tetrahydrodipicolinate + acetyl-CoA + H2O = L-2-acetamido-6-oxoheptanedioate + CoA. It participates in amino-acid biosynthesis; L-lysine biosynthesis via DAP pathway; LL-2,6-diaminopimelate from (S)-tetrahydrodipicolinate (acetylase route): step 1/3. In terms of biological role, catalyzes the transfer of an acetyl group from acetyl-CoA to tetrahydrodipicolinate. In Staphylococcus saprophyticus subsp. saprophyticus (strain ATCC 15305 / DSM 20229 / NCIMB 8711 / NCTC 7292 / S-41), this protein is 2,3,4,5-tetrahydropyridine-2,6-dicarboxylate N-acetyltransferase.